The following is a 481-amino-acid chain: Rhamnogalacturonan I rhamnosyltransferase 4 (481 aa).

A helical; Signal-anchor for type II membrane protein transmembrane segment spans residues 33-55 (VWFFRVCSCILVWTCLIQLFWHS). Residues asparagine 85 and asparagine 118 are each glycosylated (N-linked (GlcNAc...) asparagine). Position 258–260 (258–260 (HLR)) interacts with substrate. Residues asparagine 372 and asparagine 432 are each glycosylated (N-linked (GlcNAc...) asparagine).

It belongs to the glycosyltransferase GT106 family.

Its subcellular location is the golgi apparatus membrane. It carries out the reaction alpha-D-galacturonosyl-[(1-&gt;2)-alpha-L-rhamnosyl-(1-&gt;4)-alpha-D-galacturonosyl](n) + UDP-beta-L-rhamnose = [(1-&gt;2)-alpha-L-rhamnosyl-(1-&gt;4)-alpha-D-galacturonosyl](n+1) + UDP + H(+). It participates in glycan metabolism; pectin biosynthesis. Its function is as follows. Glycosyltransferase involved in the formation of rhamnogalacturonan I (RG-I) oligosaccharides in the seed coat mucilage, which is a specialized cell wall with abundant RG-I. Transfers the rhamnose residue from UDP-beta-L-rhamnose to RG-I oligosaccharides. The chain is Rhamnogalacturonan I rhamnosyltransferase 4 from Arabidopsis thaliana (Mouse-ear cress).